Here is a 154-residue protein sequence, read N- to C-terminus: uncharacterized protein (154 aa).

This is an uncharacterized protein from Bacillus subtilis (strain 168).